The chain runs to 314 residues: E3 ubiquitin-protein ligase SINA-like 11 (314 aa).

A compositionally biased stretch (polar residues) spans 1 to 12; it reads MEDSNSHPQNQT. Residues 1–31 form a disordered region; it reads MEDSNSHPQNQTSKRKSSHPQKKQRMENETR. Residues 13–23 show a composition bias toward basic residues; that stretch reads SKRKSSHPQKK. An RING-type; degenerate zinc finger spans residues 43 to 81; it reads CPVCFEPLTIPTFQCDDGHIVCNFCFAKVSNKCPGPGCD. Positions 95-280 are SBD; sequence VLESAFVPCQ…PANEVQQVTI (186 aa). The SIAH-type zinc finger occupies 98–156; sequence SAFVPCQNTEFGCTKSVSYEKVSSHEKECNYSQCSCPNLECNYTGSYNIIYGHFMRRHL. The Zn(2+) site is built by Cys-103, Cys-110, His-122, Cys-126, Cys-133, Cys-138, His-150, and His-155.

This sequence belongs to the SINA (Seven in absentia) family.

It catalyses the reaction S-ubiquitinyl-[E2 ubiquitin-conjugating enzyme]-L-cysteine + [acceptor protein]-L-lysine = [E2 ubiquitin-conjugating enzyme]-L-cysteine + N(6)-ubiquitinyl-[acceptor protein]-L-lysine.. It participates in protein modification; protein ubiquitination. Functionally, E3 ubiquitin-protein ligase that mediates ubiquitination and subsequent proteasomal degradation of target proteins. E3 ubiquitin ligases accept ubiquitin from an E2 ubiquitin-conjugating enzyme in the form of a thioester and then directly transfers the ubiquitin to targeted substrates. It probably triggers the ubiquitin-mediated degradation of different substrates. In Arabidopsis thaliana (Mouse-ear cress), this protein is E3 ubiquitin-protein ligase SINA-like 11.